Reading from the N-terminus, the 456-residue chain is MGWAGDAGCTPRPPIRPRPASERRVIIVLFLGLLLDLLAFTLLLPLLPGLLERHGREQDPLYGSWQRGVDWFASAIGMPAEKRYNSVLFGGLIGSAFSLLQFFSAPLTGAASDYLGRRPVMMLSLTGLAISYAVWATSRSFKAFLASRVIGGISKGNVNLSTAIVADLGSPPTRSQGMAVIGVAFSLAFTLGPMLGAFLSVEMVPWISLLFAISDMLFIFCFLPETLPQEKRASSVTLGFHTAAHLLSPLALLRFAAVTHSQDPPAEHRLRNLRRLGLVYFLYLFLFSGLEYTLSFLAHQRFQFSSLQQGKMFFFIGLTMATIQGTYARRISPGKEAAAVTRAMLLLVPAFLLIGWAHSLPTLGLGLMLYSFAAAVVVPGLSTMVSSYGSPGQKGTIMGILRSLGALGRALGPVVAASVYWLTGAQVCFTVCSALFLLPFLLLWKLKHPAETSKEE.

3 helical membrane passes run 25 to 45 (VIIV…LLLP), 87 to 107 (VLFG…SAPL), and 114 to 136 (YLGR…AVWA). A glycan (N-linked (GlcNAc...) asparagine) is linked at asparagine 159. A run of 8 helical transmembrane segments spans residues 179–199 (AVIG…GAFL), 203–223 (MVPW…FCFL), 278–298 (LVYF…SFLA), 311–328 (KMFF…GTYA), 345–365 (LLLV…TLGL), 366–386 (GLML…TMVS), 403–423 (SLGA…YWLT), and 424–444 (GAQV…LLLW).

It belongs to the major facilitator superfamily. As to expression, esxpressed in luminal membrane of renal tubules. Expressed at the surface of eosinophils (at protein level).

The protein resides in the nucleus inner membrane. It localises to the cell membrane. Its function is as follows. Probable organic anion transporter which may serve as a transporter for some non-steroidal anti-inflammatory drugs (NSAIDs) as well as other organic anions across the luminal membranes of renal proximal tubules at the final excretion step into the urine. This chain is Major facilitator superfamily domain-containing protein 10 (Mfsd10), found in Mus musculus (Mouse).